We begin with the raw amino-acid sequence, 581 residues long: Zinc finger protein 674 (581 aa).

The region spanning 8–79 (LTFKDVFVDF…DGGTPVRTCA (72 aa)) is the KRAB domain. 4 consecutive C2H2-type zinc fingers follow at residues 224-246 (YKCT…QRTH), 252-274 (YECC…QRTH), 280-302 (YECS…QRTH), and 308-330 (FVCD…EKTH). A compositionally biased stretch (basic and acidic residues) spans 357 to 371 (PQCSEHGKASDEKPS). Positions 357-377 (PQCSEHGKASDEKPSPTKHWR) are disordered. 7 consecutive C2H2-type zinc fingers follow at residues 385-407 (YECS…QRIH), 413-435 (YECS…HRTH), 441-463 (YECR…QRMH), 469-491 (YKCN…QRIH), 497-519 (YECT…QRIH), 525-547 (YKCS…HRTH), and 553-575 (YECR…QRSH).

It belongs to the krueppel C2H2-type zinc-finger protein family. As to expression, expressed in testis.

The protein localises to the nucleus. Its function is as follows. May be involved in transcriptional regulation. This chain is Zinc finger protein 674 (ZNF674), found in Homo sapiens (Human).